The sequence spans 92 residues: Alpha-defensin 25 (92 aa).

The signal sequence occupies residues 1-19 (MKTLVLLSALALLAFQVQA). Residues 20-57 (DPIQNRDEESKIDEQPGKEDQAVSVSFGDPEGSSLQEE) constitute a propeptide that is removed on maturation. Residues 24-40 (NRDEESKIDEQPGKEDQ) are compositionally biased toward basic and acidic residues. A disordered region spans residues 24–53 (NRDEESKIDEQPGKEDQAVSVSFGDPEGSS). 3 cysteine pairs are disulfide-bonded: C63–C92, C65–C80, and C70–C91.

This sequence belongs to the alpha-defensin family.

Its subcellular location is the secreted. Its function is as follows. May have microbicidal activities. This chain is Alpha-defensin 25 (Defa25), found in Mus musculus (Mouse).